Consider the following 236-residue polypeptide: Small ribosomal subunit protein uS2c (236 aa).

Belongs to the universal ribosomal protein uS2 family.

The protein resides in the plastid. It is found in the chloroplast. This Draba nemorosa (Woodland whitlowgrass) protein is Small ribosomal subunit protein uS2c (rps2).